A 304-amino-acid polypeptide reads, in one-letter code: MDSAKPLALPADWRDFFALTKPRVMTLVIFTGLCGLLAAPGTIHPVIAFTAILCIAVGAGGAAALNQWWEADIDAGMKRTAQRPLPAGRMDRTSARDFGFALAGGSVFVMGLGVGWLAAVILAFSIFYYSWIYTVWLKPRTPQNIVIGGGAGAFPPMIGWVAVTGDITLMPVLLFLIIFMWTPPHFWALALFVQTDYAKVGIPMMPVVAGERSTRKQILAYSILLLPLTLVPWWIGGAGAVYGWSALVLGLVFVALSVKVGLRRSVPNDGMLPEKRLFGYSVLYLFVLFGMLVGDRLATVQGWQ.

Transmembrane regions (helical) follow at residues Val24 to His44, Pro45 to Leu65, Val107 to Phe127, Ile145 to Gly165, Val172 to Phe192, Trp234 to Val254, and Leu277 to Leu297.

This sequence belongs to the UbiA prenyltransferase family. Protoheme IX farnesyltransferase subfamily.

Its subcellular location is the cell inner membrane. The enzyme catalyses heme b + (2E,6E)-farnesyl diphosphate + H2O = Fe(II)-heme o + diphosphate. The protein operates within porphyrin-containing compound metabolism; heme O biosynthesis; heme O from protoheme: step 1/1. Its function is as follows. Converts heme B (protoheme IX) to heme O by substitution of the vinyl group on carbon 2 of heme B porphyrin ring with a hydroxyethyl farnesyl side group. This chain is Protoheme IX farnesyltransferase, found in Novosphingobium aromaticivorans (strain ATCC 700278 / DSM 12444 / CCUG 56034 / CIP 105152 / NBRC 16084 / F199).